The sequence spans 149 residues: Azurin (149 aa).

The first 20 residues, 1-20 (MLAKATLAIVLSAASLPVLA), serve as a signal peptide directing secretion. The region spanning 21 to 149 (AQCEATIESN…MMKGTLKLSN (129 aa)) is the Plastocyanin-like domain. A disulfide bond links Cys-23 and Cys-46. The Cu cation site is built by His-66, Cys-132, His-137, and Met-141.

The protein resides in the periplasm. Functionally, transfers electrons from cytochrome c551 to cytochrome oxidase. The protein is Azurin (azu) of Achromobacter denitrificans (Alcaligenes denitrificans).